A 632-amino-acid polypeptide reads, in one-letter code: Probable extracellular metalloproteinase 2 (632 aa).

An N-terminal signal peptide occupies residues 1–19 (MHGLLLAGLAAALPLGVAG). The propeptide occupies 20-244 (LPARQQSGLS…VHNVVDYVAS (225 aa)). Asn81 and Asn270 each carry an N-linked (GlcNAc...) asparagine glycan. His429 lines the Zn(2+) pocket. The active site involves Glu430. His433 lines the Zn(2+) pocket.

The protein belongs to the peptidase M36 family. The cofactor is Zn(2+).

The protein resides in the secreted. In terms of biological role, secreted metalloproteinase probably acting as a virulence factor. This Arthroderma benhamiae (strain ATCC MYA-4681 / CBS 112371) (Trichophyton mentagrophytes) protein is Probable extracellular metalloproteinase 2 (MEP2).